Consider the following 243-residue polypeptide: Ubiquinone/menaquinone biosynthesis C-methyltransferase UbiE (243 aa).

S-adenosyl-L-methionine is bound by residues Thr-69, Asp-90, and 116–117; that span reads DA.

Belongs to the class I-like SAM-binding methyltransferase superfamily. MenG/UbiE family.

The catalysed reaction is a 2-demethylmenaquinol + S-adenosyl-L-methionine = a menaquinol + S-adenosyl-L-homocysteine + H(+). It carries out the reaction a 2-methoxy-6-(all-trans-polyprenyl)benzene-1,4-diol + S-adenosyl-L-methionine = a 5-methoxy-2-methyl-3-(all-trans-polyprenyl)benzene-1,4-diol + S-adenosyl-L-homocysteine + H(+). It functions in the pathway quinol/quinone metabolism; menaquinone biosynthesis; menaquinol from 1,4-dihydroxy-2-naphthoate: step 2/2. The protein operates within cofactor biosynthesis; ubiquinone biosynthesis. In terms of biological role, methyltransferase required for the conversion of demethylmenaquinol (DMKH2) to menaquinol (MKH2) and the conversion of 2-polyprenyl-6-methoxy-1,4-benzoquinol (DDMQH2) to 2-polyprenyl-3-methyl-6-methoxy-1,4-benzoquinol (DMQH2). This chain is Ubiquinone/menaquinone biosynthesis C-methyltransferase UbiE, found in Cupriavidus necator (strain ATCC 17699 / DSM 428 / KCTC 22496 / NCIMB 10442 / H16 / Stanier 337) (Ralstonia eutropha).